Reading from the N-terminus, the 153-residue chain is Adenosine 5'-monophosphoramidase HINT3 (153 aa).

Positions Ile-20–Arg-130 constitute an HIT domain. Residues Asp-46–Ile-47 and His-115–His-117 each bind AMP. A Histidine triad motif motif is present at residues His-113–His-117. The active-site Tele-AMP-histidine intermediate is His-115.

It belongs to the HINT family. As to quaternary structure, forms dimers to octamers and even larger oligomer.

It localises to the cytoplasm. Its subcellular location is the nucleus. It carries out the reaction adenosine 5'-phosphoramidate + H2O = AMP + NH4(+). Its function is as follows. Exhibits adenosine 5'-monophosphoramidase activity, hydrolyzing purine nucleotide phosphoramidates with a single phosphate group such as adenosine 5'monophosphoramidate (AMP-NH2) to yield AMP and NH2. Hydrolyzes lysyl-AMP (AMP-N-epsilon-(N-alpha-acetyl lysine methyl ester)) generated by lysine tRNA ligase. The polypeptide is Adenosine 5'-monophosphoramidase HINT3 (hint3) (Xenopus tropicalis (Western clawed frog)).